Reading from the N-terminus, the 490-residue chain is MSAIFEILDKDAGGRIGRLRTPHGTVETPTVMPVINPNIQLIPPKEMRNFGAEILITNSYIIYRKEELKSVALEKGLHGLLGFDGPIMTDSGSFQLSVYGSVEVTNEEILGFQQKIGSDIIVPLDIPTPPDVHYRRAEEELAITAERLEAARKFIQSEQLLAGPVQGSTYPELREKAASHLKDLNFEVYPLGAVVPLMEAYRYAELVDVIAASKKGLSPASPVHLFGAGHPMMFALAVAMGCDLFDSAAYALYAKDGRYITVNGTYHVEKLNYLPCSCPVCSKYTAEELKKADNREELLGKHNLYATFAEIRLIKQCIKDGKLLELVEQRCRAHPKLLDGLKKLYTHSSWLEQLDPATKGTFFYCGPESSSRPEILRFGKRLDRFSLQGSVIIRTGSVKGEKDYDQILTFKAPFGAFPVEMEEVYPFNAEVPKFPDYESLNTALSNTLKLIDLNPEAEFTFICEEEFKHPLIEEIRKRAKLVYRKDWKKE.

Aspartate 90 functions as the Nucleophile in the catalytic mechanism. Substrate-binding residues include aspartate 125 and alanine 193. Zn(2+)-binding residues include cysteine 276, cysteine 278, and cysteine 281.

The protein belongs to the archaeosine tRNA-ribosyltransferase family. Zn(2+) serves as cofactor.

The catalysed reaction is guanosine(15) in tRNA + 7-cyano-7-deazaguanine = 7-cyano-7-carbaguanosine(15) in tRNA + guanine. The protein operates within tRNA modification; archaeosine-tRNA biosynthesis. Its function is as follows. Exchanges the guanine residue with 7-cyano-7-deazaguanine (preQ0) at position 15 in the dihydrouridine loop (D-loop) of archaeal tRNAs. In Methanosarcina barkeri (strain Fusaro / DSM 804), this protein is tRNA-guanine(15) transglycosylase.